The following is a 278-amino-acid chain: Shikimate dehydrogenase (NADP(+)) (278 aa).

Residues 19–21 (SRS) and Thr-66 contribute to the shikimate site. The Proton acceptor role is filled by Lys-70. Residues Asn-91 and Asp-106 each contribute to the shikimate site. NADP(+) contacts are provided by residues 129–133 (GAGGA) and Phe-221. Tyr-223 contacts shikimate. Gly-242 contacts NADP(+).

Belongs to the shikimate dehydrogenase family. As to quaternary structure, homodimer.

It catalyses the reaction shikimate + NADP(+) = 3-dehydroshikimate + NADPH + H(+). It functions in the pathway metabolic intermediate biosynthesis; chorismate biosynthesis; chorismate from D-erythrose 4-phosphate and phosphoenolpyruvate: step 4/7. Involved in the biosynthesis of the chorismate, which leads to the biosynthesis of aromatic amino acids. Catalyzes the reversible NADPH linked reduction of 3-dehydroshikimate (DHSA) to yield shikimate (SA). The protein is Shikimate dehydrogenase (NADP(+)) of Anaeromyxobacter dehalogenans (strain 2CP-C).